The following is a 180-amino-acid chain: Small ribosomal subunit protein uS4 (180 aa).

The S4 RNA-binding domain occupies 103–174; that stretch reads RRLQTIVYKK…HPERMMIEKA (72 aa).

Belongs to the universal ribosomal protein uS4 family. In terms of assembly, part of the 30S ribosomal subunit. Contacts protein S5. The interaction surface between S4 and S5 is involved in control of translational fidelity.

Its function is as follows. One of the primary rRNA binding proteins, it binds directly to 16S rRNA where it nucleates assembly of the body of the 30S subunit. In terms of biological role, with S5 and S12 plays an important role in translational accuracy. This is Small ribosomal subunit protein uS4 from Pyrococcus horikoshii (strain ATCC 700860 / DSM 12428 / JCM 9974 / NBRC 100139 / OT-3).